Reading from the N-terminus, the 98-residue chain is Small ribosomal subunit protein bS18 (98 aa).

The protein belongs to the bacterial ribosomal protein bS18 family. As to quaternary structure, part of the 30S ribosomal subunit. Forms a tight heterodimer with protein bS6.

Functionally, binds as a heterodimer with protein bS6 to the central domain of the 16S rRNA, where it helps stabilize the platform of the 30S subunit. In Flavobacterium psychrophilum (strain ATCC 49511 / DSM 21280 / CIP 103535 / JIP02/86), this protein is Small ribosomal subunit protein bS18.